The following is a 78-amino-acid chain: MRLILWLPVLVVVLLMVTEGPAPAQGAPDVASTFRNIPNSLKEFGNNLKDTFESIPEATRKLMTSFAERLKNFRIPLL.

The signal sequence occupies residues 1-26 (MRLILWLPVLVVVLLMVTEGPAPAQG).

Belongs to the apolipoprotein C1 family.

The protein localises to the secreted. In terms of biological role, inhibitor of lipoprotein binding to the low density lipoprotein (LDL) receptor, LDL receptor-related protein, and very low density lipoprotein (VLDL) receptor. Associates with high density lipoproteins (HDL) and the triacylglycerol-rich lipoproteins in the plasma and makes up about 10% of the protein of the VLDL and 2% of that of HDL. Appears to interfere directly with fatty acid uptake and is also the major plasma inhibitor of cholesteryl ester transfer protein (CETP). Binds free fatty acids and reduces their intracellular esterification. Modulates the interaction of APOE with beta-migrating VLDL and inhibits binding of beta-VLDL to the LDL receptor-related protein. The chain is Apolipoprotein C-I (APOC1) from Panthera tigris altaica (Siberian tiger).